The sequence spans 341 residues: Heterogeneous nuclear ribonucleoproteins A2/B1 (341 aa).

RRM domains follow at residues 9–92 (RKLF…ESGK) and 100–179 (KKLF…LSRQ). Lysine 10 is covalently cross-linked (Glycyl lysine isopeptide (Lys-Gly) (interchain with G-Cter in SUMO2)). A Phosphoserine modification is found at serine 17. Position 26 is an omega-N-methylarginine (arginine 26). Serine 73 bears the Phosphoserine mark. Lysine 92 carries the N6,N6-dimethyllysine; alternate modification. A Glycyl lysine isopeptide (Lys-Gly) (interchain with G-Cter in SUMO2); alternate cross-link involves residue lysine 92. Residues lysine 100, lysine 108, and lysine 125 each participate in a glycyl lysine isopeptide (Lys-Gly) (interchain with G-Cter in SUMO2) cross-link. Threonine 128 carries the phosphothreonine modification. Serine 137 is modified (phosphoserine). Lysine 140 is covalently cross-linked (Glycyl lysine isopeptide (Lys-Gly) (interchain with G-Cter in SUMO2)). Residue threonine 147 is modified to Phosphothreonine. Glycyl lysine isopeptide (Lys-Gly) (interchain with G-Cter in SUMO2); alternate cross-links involve residues lysine 156 and lysine 161. N6-acetyllysine; alternate occurs at positions 156 and 161. Threonine 164 bears the Phosphothreonine mark. Lysine 174 participates in a covalent cross-link: Glycyl lysine isopeptide (Lys-Gly) (interchain with G-Cter in SUMO2). 2 positions are modified to phosphoserine: serine 177 and serine 189. A disordered region spans residues 181-341 (MQEVQSSRSG…SGGYGGRSRY (161 aa)). The segment covering 190-211 (GRGGNFGFGDSRGGGGNFGPGP) has biased composition (gly residues). Asymmetric dimethylarginine; alternate is present on arginine 191. Arginine 191 carries the dimethylated arginine; alternate modification. Arginine 191 bears the Omega-N-methylarginine; alternate mark. At serine 200 the chain carries Phosphoserine. At arginine 201 the chain carries Asymmetric dimethylarginine; alternate. Arginine 201 carries the dimethylated arginine; alternate modification. At arginine 201 the chain carries Omega-N-methylarginine; alternate. Serine 213 is modified (phosphoserine). Position 216 is an omega-N-methylarginine (arginine 216). Serine 219 and serine 224 each carry phosphoserine. Arginine 226 bears the Omega-N-methylarginine mark. A Phosphoserine modification is found at serine 247. An Asymmetric dimethylarginine; alternate modification is found at arginine 254. At arginine 254 the chain carries Omega-N-methylarginine; alternate. Residues 296-335 (QQPSNYGPMKSGNFGGSRNMGGPYGGGNYGPGGSGGSGGY) are nuclear targeting sequence. The segment covering 308–341 (NFGGSRNMGGPYGGGNYGPGGSGGSGGYGGRSRY) has biased composition (gly residues). Serine 312 is subject to Phosphoserine. At arginine 313 the chain carries Omega-N-methylarginine. Tyrosine 319 is modified (phosphotyrosine). Phosphoserine occurs at positions 329 and 332. At tyrosine 335 the chain carries Phosphotyrosine. At arginine 338 the chain carries Omega-N-methylarginine.

As to quaternary structure, identified in the spliceosome C complex. Identified in a IGF2BP1-dependent mRNP granule complex containing untranslated mRNAs. Interacts with IGF2BP1. Interacts with C9orf72. Interacts with DGCR8. Interacts with TARDBP. Interacts with CKAP5. Interacts with PPIA/CYPA. Interacts (via C-terminus) with FAM76B; the interaction results in retention of HNRNPA2B1 in the nucleus and inhibition of the NF-kappa-B-mediated inflammatory pathway. Interacts with NF-kappa-B inhibitors NFKBIA and NFKBIE; the interaction may be mediated by the RRM2 domain of HNRNPA2B1, and HNRNPA2B1 may interact simultaneously with FAM76B and either NFKBIA or NFKBIE to form a complex. In terms of processing, sumoylated in exosomes, promoting miRNAs-binding. Asymmetric dimethylation at Arg-254 constitutes the major methylation site. According to a report, methylation affects subcellular location and promotes nuclear localization. According to another report, methylation at Arg-254 does not influence nucleocytoplasmic shuttling.

The protein localises to the nucleus. It is found in the nucleoplasm. It localises to the cytoplasmic granule. The protein resides in the secreted. Its subcellular location is the extracellular exosome. Its function is as follows. Heterogeneous nuclear ribonucleoprotein (hnRNP) that associates with nascent pre-mRNAs, packaging them into hnRNP particles. The hnRNP particle arrangement on nascent hnRNA is non-random and sequence-dependent and serves to condense and stabilize the transcripts and minimize tangling and knotting. Packaging plays a role in various processes such as transcription, pre-mRNA processing, RNA nuclear export, subcellular location, mRNA translation and stability of mature mRNAs. Forms hnRNP particles with at least 20 other different hnRNP and heterogeneous nuclear RNA in the nucleus. Involved in transport of specific mRNAs to the cytoplasm in oligodendrocytes and neurons: acts by specifically recognizing and binding the A2RE (21 nucleotide hnRNP A2 response element) or the A2RE11 (derivative 11 nucleotide oligonucleotide) sequence motifs present on some mRNAs, and promotes their transport to the cytoplasm. Specifically binds single-stranded telomeric DNA sequences, protecting telomeric DNA repeat against endonuclease digestion. Also binds other RNA molecules, such as primary miRNA (pri-miRNAs): acts as a nuclear 'reader' of the N6-methyladenosine (m6A) mark by specifically recognizing and binding a subset of nuclear m6A-containing pri-miRNAs. Binding to m6A-containing pri-miRNAs promotes pri-miRNA processing by enhancing binding of DGCR8 to pri-miRNA transcripts. Involved in miRNA sorting into exosomes following sumoylation, possibly by binding (m6A)-containing pre-miRNAs. Acts as a regulator of efficiency of mRNA splicing, possibly by binding to m6A-containing pre-mRNAs. Plays a role in the splicing of pyruvate kinase PKM by binding repressively to sequences flanking PKM exon 9, inhibiting exon 9 inclusion and resulting in exon 10 inclusion and production of the PKM M2 isoform. In Saguinus oedipus (Cotton-top tamarin), this protein is Heterogeneous nuclear ribonucleoproteins A2/B1 (HNRNPA2B1).